Reading from the N-terminus, the 605-residue chain is Ubiquitin carboxyl-terminal hydrolase 2 (605 aa).

The tract at residues 1–200 is necessary for interaction with MDM4; it reads MSQLSSTLKR…CPEYLVDYLE (200 aa). Disordered regions lie at residues 71–107 and 237–264; these read LLDYDRGRPLLRPDITGGGKRAESQTRGTERPLGSGL and WETGKGQAPGPSRSSSPGRDGMNSKSAQ. Over residues 90–100 the composition is skewed to basic and acidic residues; the sequence is KRAESQTRGTE. The span at 245 to 255 shows a compositional bias: low complexity; the sequence is PGPSRSSSPGR. A USP domain is found at 267 to 599; that stretch reads AGLRNLGNTC…DAYLLFYELA (333 aa). The active-site Nucleophile is Cys276. The necessary for interaction with MDM4 stretch occupies residues 403–503; sequence YLEREDSRIG…FPKILVLHLK (101 aa). 4 residues coordinate Zn(2+): Cys425, Cys428, Cys476, and Cys479. His557 serves as the catalytic Proton acceptor.

Belongs to the peptidase C19 family. USP2 subfamily. In terms of assembly, homooligomer. Found in trimeric complex with MDM2 and MDM4 and USP2. Interacts with CCND1; the interaction is direct and promotes its stabilization by antagonizing ubiquitin-dependent degradation. Interacts (via N-terminus and C-terminus) with MDM2. Interacts with MDM4. Interacts with PER1. Interacts with KCNQ1; counteracts the NEDD4L-specific down-regulation of I(Ks) and restore plasma membrane localization of KCNQ1. Isoform 4: Interacts with NHERF4 and CLTC. Expressed in mesangial cells of the kidney and in different types of glomerulonephritides (at protein level).

The protein localises to the cytoplasm. Its subcellular location is the perinuclear region. It is found in the nucleus. The protein resides in the membrane. It catalyses the reaction Thiol-dependent hydrolysis of ester, thioester, amide, peptide and isopeptide bonds formed by the C-terminal Gly of ubiquitin (a 76-residue protein attached to proteins as an intracellular targeting signal).. With respect to regulation, cleavage is inhibited by ubiquitin in a dosage-dependent manner. Cleavage is blocked by ubiquitin aldehyde. Hydrolase that deubiquitinates polyubiquitinated target proteins such as MDM2, MDM4 and CCND1. Isoform 1 and isoform 4 possess both ubiquitin-specific peptidase and isopeptidase activities. Deubiquitinates MDM2 without reversing MDM2-mediated p53/TP53 ubiquitination and thus indirectly promotes p53/TP53 degradation and limits p53 activity. Has no deubiquitinase activity against p53/TP53. Prevents MDM2-mediated degradation of MDM4. Plays a role in the G1/S cell-cycle progression in normal and cancer cells. Regulates the circadian clock by modulating its intrinsic circadian rhythm and its capacity to respond to external cues. Associates with clock proteins and deubiquitinates core clock component PER1 but does not affect its overall stability. Regulates the nucleocytoplasmic shuttling and nuclear retention of PER1 and its repressive role on the clock transcription factors CLOCK and BMAL1. Plays a role in the regulation of myogenic differentiation of embryonic muscle cells. Its function is as follows. Circadian clock output effector that regulates Ca(2+) absorption in the small intestine. Probably functions by regulating protein levels of the membrane scaffold protein NHERF4 in a rhythmic manner, and is therefore likely to control Ca(2+) membrane permeability mediated by the Ca(2+) channel TRPV6 in the intestine. This is Ubiquitin carboxyl-terminal hydrolase 2 (USP2) from Homo sapiens (Human).